A 355-amino-acid polypeptide reads, in one-letter code: UPF0421 protein BCE33L2478 (355 aa).

A run of 4 helical transmembrane segments spans residues 19–39, 74–94, 109–129, and 131–151; these read IAVFLTVLVCEFFNIPTIFAV, FTFFLGHQALSYALAAMFTIV, TLTAVAMIPITADHYFTAFLI, and LATTSTGIIVSTVVNFFILPP.

It belongs to the UPF0421 family.

The protein localises to the cell membrane. The protein is UPF0421 protein BCE33L2478 of Bacillus cereus (strain ZK / E33L).